Consider the following 569-residue polypeptide: Glutamate--tRNA ligase, chloroplastic/mitochondrial (569 aa).

Residue 59–61 (RFA) participates in L-glutamate binding. Positions 62–72 (PSPTGNLHVGG) match the 'HIGH' region motif. Position 69 (H69) interacts with ATP. L-glutamate is bound by residues E95, 247-251 (YNFCV), and R265. ATP is bound by residues E268 and 303 to 307 (KLSKR). Positions 303–307 (KLSKR) match the 'KMSKS' region motif.

The protein belongs to the class-I aminoacyl-tRNA synthetase family. Glutamate--tRNA ligase type 1 subfamily.

It is found in the plastid. The protein resides in the chloroplast. The protein localises to the mitochondrion. The catalysed reaction is tRNA(Glu) + L-glutamate + ATP = L-glutamyl-tRNA(Glu) + AMP + diphosphate. Functionally, catalyzes the attachment of glutamate to tRNA(Glu) in a two-step reaction: glutamate is first activated by ATP to form Glu-AMP and then transferred to the acceptor end of tRNA(Glu). The sequence is that of Glutamate--tRNA ligase, chloroplastic/mitochondrial from Nicotiana tabacum (Common tobacco).